A 966-amino-acid polypeptide reads, in one-letter code: Leucine--tRNA ligase (966 aa).

The 'HIGH' region signature appears at 41-51; it reads PYLNGNLHAGH. The 'KMSKS' region motif lies at 632–636; the sequence is KMSKS. Lys-635 contributes to the ATP binding site.

It belongs to the class-I aminoacyl-tRNA synthetase family.

The protein localises to the cytoplasm. It carries out the reaction tRNA(Leu) + L-leucine + ATP = L-leucyl-tRNA(Leu) + AMP + diphosphate. This is Leucine--tRNA ligase from Methanosarcina barkeri (strain Fusaro / DSM 804).